The primary structure comprises 89 residues: Conotoxin Lt6.4 (89 aa).

A signal peptide spans 1–22; that stretch reads MKLTCVPIVAMLFLMACQLITA. A propeptide spanning residues 23-50 is cleaved from the precursor; the sequence is DYSREKHGYSAEKSSDKIQDSFYSKLTK. 3 disulfide bridges follow: cysteine 52/cysteine 67, cysteine 59/cysteine 71, and cysteine 66/cysteine 80.

The protein belongs to the conotoxin O1 superfamily. In terms of tissue distribution, expressed by the venom duct.

Its subcellular location is the secreted. This chain is Conotoxin Lt6.4, found in Conus litteratus (Lettered cone).